Here is a 221-residue protein sequence, read N- to C-terminus: Protein GrpE (221 aa).

The interval 1-43 (MFTNPFGRKKDMSDDQKKNNQPDTEADNAENIKFAADDTELRA) is disordered. Basic and acidic residues predominate over residues 8 to 20 (RKKDMSDDQKKNN).

The protein belongs to the GrpE family. Homodimer.

It is found in the cytoplasm. In terms of biological role, participates actively in the response to hyperosmotic and heat shock by preventing the aggregation of stress-denatured proteins, in association with DnaK and GrpE. It is the nucleotide exchange factor for DnaK and may function as a thermosensor. Unfolded proteins bind initially to DnaJ; upon interaction with the DnaJ-bound protein, DnaK hydrolyzes its bound ATP, resulting in the formation of a stable complex. GrpE releases ADP from DnaK; ATP binding to DnaK triggers the release of the substrate protein, thus completing the reaction cycle. Several rounds of ATP-dependent interactions between DnaJ, DnaK and GrpE are required for fully efficient folding. The polypeptide is Protein GrpE (Deinococcus radiodurans (strain ATCC 13939 / DSM 20539 / JCM 16871 / CCUG 27074 / LMG 4051 / NBRC 15346 / NCIMB 9279 / VKM B-1422 / R1)).